Reading from the N-terminus, the 320-residue chain is Arylacetonitrilase (320 aa).

Residues 5–286 (IKASVVQAST…EGVISAELDL (282 aa)) form the CN hydrolase domain. E46 serves as the catalytic Proton acceptor. K133 is an active-site residue. The active-site Nucleophile is the C178.

This sequence belongs to the carbon-nitrogen hydrolase superfamily. Nitrilase family.

It carries out the reaction a nitrile + 2 H2O = a carboxylate + NH4(+). Its function is as follows. Nitrilase that hydrolyzes preferentially fumaronitrile, while 3-phenylpropionitrile, beta-cyano-L-alanine and 4-cyanopyridine are transformed at much lower rates. In Trametes versicolor (strain FP-101664) (White-rot fungus), this protein is Arylacetonitrilase (nit).